The chain runs to 371 residues: tRNA/tmRNA (uracil-C(5))-methyltransferase (371 aa).

Residues Gln194, Tyr223, Asn228, Glu244, and Asp304 each coordinate S-adenosyl-L-methionine. The active-site Nucleophile is Cys329. Residue Glu363 is the Proton acceptor of the active site.

The protein belongs to the class I-like SAM-binding methyltransferase superfamily. RNA M5U methyltransferase family. TrmA subfamily.

It catalyses the reaction uridine(54) in tRNA + S-adenosyl-L-methionine = 5-methyluridine(54) in tRNA + S-adenosyl-L-homocysteine + H(+). The enzyme catalyses uridine(341) in tmRNA + S-adenosyl-L-methionine = 5-methyluridine(341) in tmRNA + S-adenosyl-L-homocysteine + H(+). Its function is as follows. Dual-specificity methyltransferase that catalyzes the formation of 5-methyluridine at position 54 (m5U54) in all tRNAs, and that of position 341 (m5U341) in tmRNA (transfer-mRNA). The polypeptide is tRNA/tmRNA (uracil-C(5))-methyltransferase (Sulfurovum sp. (strain NBC37-1)).